The sequence spans 202 residues: Urease accessory protein UreF (202 aa).

It belongs to the UreF family. UreD, UreF and UreG form a complex that acts as a GTP-hydrolysis-dependent molecular chaperone, activating the urease apoprotein by helping to assemble the nickel containing metallocenter of UreC. The UreE protein probably delivers the nickel.

The protein localises to the cytoplasm. In terms of biological role, required for maturation of urease via the functional incorporation of the urease nickel metallocenter. This is Urease accessory protein UreF from Sporosarcina pasteurii (Bacillus pasteurii).